The following is a 149-amino-acid chain: Calmodulin, striated muscle (149 aa).

EF-hand domains lie at 8-43 (EQIA…LGQN), 44-79 (PTEA…KMRD), 81-116 (DSEE…LGEK), and 117-149 (LTDE…MTEK). Residues Asp21, Asp23, Asp25, Cys27, Glu32, Asp57, Asp59, Ser61, Thr63, Glu68, Asp94, Asp96, Asn98, Tyr100, and Glu105 each contribute to the Ca(2+) site. Lys116 carries the post-translational modification N6,N6,N6-trimethyllysine. Positions 130, 132, 134, 136, and 141 each coordinate Ca(2+).

It belongs to the calmodulin family.

The sequence is that of Calmodulin, striated muscle (CCM1) from Gallus gallus (Chicken).